Reading from the N-terminus, the 369-residue chain is D-alanine--D-alanine ligase (369 aa).

The ATP-grasp domain occupies Lys-152–Glu-359. Arg-180–Glu-235 lines the ATP pocket. Positions 314, 326, and 328 each coordinate Mg(2+).

Belongs to the D-alanine--D-alanine ligase family. Mg(2+) is required as a cofactor. The cofactor is Mn(2+).

The protein localises to the cytoplasm. The enzyme catalyses 2 D-alanine + ATP = D-alanyl-D-alanine + ADP + phosphate + H(+). It participates in cell wall biogenesis; peptidoglycan biosynthesis. Functionally, cell wall formation. The chain is D-alanine--D-alanine ligase from Mycolicibacterium paratuberculosis (strain ATCC BAA-968 / K-10) (Mycobacterium paratuberculosis).